The sequence spans 369 residues: Coiled-coil domain-containing protein 130 homolog (369 aa).

Residues 233 to 263 show a composition bias toward basic and acidic residues; sequence TRYRDTKTHDDHLESSRDRIESRRIFRRPEE. A disordered region spans residues 233–369; sequence TRYRDTKTHD…EYGNSSDDSD (137 aa). Positions 266-282 are enriched in low complexity; the sequence is TPSTSSGSSGGAVPSAS. Residues 283-297 are compositionally biased toward basic and acidic residues; that stretch reads ERLKATMKAERDKRI. The segment covering 299-310 has biased composition (low complexity); the sequence is ASFSTAGTSSAT.

It belongs to the CWC16 family.

In Caenorhabditis elegans, this protein is Coiled-coil domain-containing protein 130 homolog.